The following is a 375-amino-acid chain: Erythronate-4-phosphate dehydrogenase (375 aa).

2 residues coordinate substrate: Ser-45 and Thr-66. Positions 146 and 175 each coordinate NAD(+). The active site involves Arg-208. Asp-232 contacts NAD(+). Glu-237 is an active-site residue. Catalysis depends on His-254, which acts as the Proton donor. Gly-257 serves as a coordination point for NAD(+). Tyr-258 provides a ligand contact to substrate.

Belongs to the D-isomer specific 2-hydroxyacid dehydrogenase family. PdxB subfamily. As to quaternary structure, homodimer.

It is found in the cytoplasm. It carries out the reaction 4-phospho-D-erythronate + NAD(+) = (R)-3-hydroxy-2-oxo-4-phosphooxybutanoate + NADH + H(+). Its pathway is cofactor biosynthesis; pyridoxine 5'-phosphate biosynthesis; pyridoxine 5'-phosphate from D-erythrose 4-phosphate: step 2/5. In terms of biological role, catalyzes the oxidation of erythronate-4-phosphate to 3-hydroxy-2-oxo-4-phosphonooxybutanoate. The polypeptide is Erythronate-4-phosphate dehydrogenase (Yersinia enterocolitica serotype O:8 / biotype 1B (strain NCTC 13174 / 8081)).